The sequence spans 454 residues: UDP-N-acetylmuramoylalanine--D-glutamate ligase (454 aa).

An ATP-binding site is contributed by 114–120; sequence GTNGKTT.

This sequence belongs to the MurCDEF family.

The protein localises to the cytoplasm. The enzyme catalyses UDP-N-acetyl-alpha-D-muramoyl-L-alanine + D-glutamate + ATP = UDP-N-acetyl-alpha-D-muramoyl-L-alanyl-D-glutamate + ADP + phosphate + H(+). It participates in cell wall biogenesis; peptidoglycan biosynthesis. Its function is as follows. Cell wall formation. Catalyzes the addition of glutamate to the nucleotide precursor UDP-N-acetylmuramoyl-L-alanine (UMA). This Desulfitobacterium hafniense (strain DSM 10664 / DCB-2) protein is UDP-N-acetylmuramoylalanine--D-glutamate ligase.